The chain runs to 31 residues: Jingzhaotoxin F7-15.33 (31 aa).

3 cysteine pairs are disulfide-bonded: C2-C16, C9-C21, and C15-C28.

It belongs to the neurotoxin 10 (Hwtx-1) family. As to expression, expressed by the venom gland.

It localises to the secreted. Its function is as follows. Probable ion channel inhibitor. In Chilobrachys guangxiensis (Chinese earth tiger tarantula), this protein is Jingzhaotoxin F7-15.33.